A 214-amino-acid polypeptide reads, in one-letter code: Thymidylate kinase (214 aa).

ATP is bound at residue 9–16; it reads GIEGCGKT.

The protein belongs to the thymidylate kinase family.

It catalyses the reaction dTMP + ATP = dTDP + ADP. Phosphorylation of dTMP to form dTDP in both de novo and salvage pathways of dTTP synthesis. The protein is Thymidylate kinase of Geotalea daltonii (strain DSM 22248 / JCM 15807 / FRC-32) (Geobacter daltonii).